The chain runs to 121 residues: MARISGVEIPNEKRVVISLTYIYGIGLSTSQKVLSKLNISEDVRTRDLTEEQIKAISTEISNFKVEGELRREVSLNIKRLMEIGCYRGLRHRKGLPVRGQSSKTNARTVKGPRKTVANKKK.

The segment at 94-121 (GLPVRGQSSKTNARTVKGPRKTVANKKK) is disordered. A compositionally biased stretch (basic residues) spans 110–121 (KGPRKTVANKKK).

The protein belongs to the universal ribosomal protein uS13 family. In terms of assembly, part of the 30S ribosomal subunit. Forms a loose heterodimer with protein S19. Forms two bridges to the 50S subunit in the 70S ribosome.

Its function is as follows. Located at the top of the head of the 30S subunit, it contacts several helices of the 16S rRNA. In the 70S ribosome it contacts the 23S rRNA (bridge B1a) and protein L5 of the 50S subunit (bridge B1b), connecting the 2 subunits; these bridges are implicated in subunit movement. Contacts the tRNAs in the A and P-sites. This is Small ribosomal subunit protein uS13 from Mesoplasma florum (strain ATCC 33453 / NBRC 100688 / NCTC 11704 / L1) (Acholeplasma florum).